The chain runs to 530 residues: MDSQSVAPVVLVILDGWGYRDALDGNAVLAAETPVLDSLWAAYPHTLLQASGRAVGLPAGQMGNSEVGHLTLGAGRVVPQELVRISDAIETGSLFQDPLLMQVCRQLRERGGRFHFVGLCSEGGVHSHIDHLYGLLKLAAQAEIPAYVHAITDGRDTLPRDGARVLAALEKELQWLGNGVIATLSGRYYAMDRDRRWERTQKAYEIMTQDGPGRGQSAAEVMEAFYAQDLTDEFIPPTRLAPGAVQPGDAVLFFNFRPDRARQLTQAFVCPDFSGFQRPLLPALTFITMTQYEADLPVQVLFKPQNLNHLLGQVVSEAGLKQLRIAETEKYAHVTYFFNGGIEQPFPGEDRILVQSPLVTTYDQAPEMSAVEVTDKAIEAIARREYSLVVLNYANPDMVGHTGNYEATIRALETVDRCLGRLLAAVVDAGGTTLILADHGNAELMWDENGNPWTAHTTNPVPCILVEGERRKIPGCGGDVKLRSNGTLADVAPTLLEILGLPQPPEMTGRSLLQPAEYTILQRQPSPVGR.

Mn(2+) is bound by residues aspartate 15 and serine 65. Serine 65 (phosphoserine intermediate) is an active-site residue. Residues histidine 126, 155–156, arginine 187, arginine 193, 257–260, and lysine 330 contribute to the substrate site; these read RD and RPDR. Mn(2+) contacts are provided by aspartate 397, histidine 401, aspartate 438, histidine 439, and histidine 456.

The protein belongs to the BPG-independent phosphoglycerate mutase family. As to quaternary structure, monomer. It depends on Mn(2+) as a cofactor.

It catalyses the reaction (2R)-2-phosphoglycerate = (2R)-3-phosphoglycerate. Its pathway is carbohydrate degradation; glycolysis; pyruvate from D-glyceraldehyde 3-phosphate: step 3/5. In terms of biological role, catalyzes the interconversion of 2-phosphoglycerate and 3-phosphoglycerate. In Synechococcus sp. (strain JA-2-3B'a(2-13)) (Cyanobacteria bacterium Yellowstone B-Prime), this protein is 2,3-bisphosphoglycerate-independent phosphoglycerate mutase.